The sequence spans 484 residues: PTS system MurNAc-GlcNAc-specific EIIBC component (484 aa).

One can recognise a PTS EIIB type-1 domain in the interval 5–87; the sequence is QQLAERIIAA…AELSGVKLGD (83 aa). The active-site Phosphocysteine intermediate; for EIIB activity is cysteine 27. The region spanning 130–484 is the PTS EIIC type-1 domain; sequence KSIANIFIPL…AMRQTDLLGD (355 aa). 10 consecutive transmembrane segments (helical) span residues 135–155, 160–180, 200–220, 234–254, 274–294, 305–325, 349–369, 384–404, 408–428, and 450–470; these read IFIPLIPAFIGAGLIGGIAAV, MVAGYISGAWITQLITVFNVI, FGATPGLGGVIGGTTLLTGIA, LQPGQGGIIGVIFAVWILSIV, IALLIVGLLTIFIFMPLAGFV, IISIGGVFSGFIIGASFLPLV, LLPIAAMAGAGQVGAALALWV, ALPVGFLGIGEPLIYGVTLPL, FLTACIGGGIGGAVIGGIGHI, and LGYIAGLLAAYAGGFVCTYLF.

It is found in the cell membrane. The enzyme catalyses N-acetyl-beta-D-muramate-(1-&gt;4)-N-acetyl-D-glucosamine(out) + N(pros)-phospho-L-histidyl-[protein] = 6-phospho-N-acetyl-beta-D-muramate-(1-&gt;4)-N-acetyl-D-glucosamine(in) + L-histidyl-[protein]. Its pathway is cell wall biogenesis; peptidoglycan recycling. Functionally, the phosphoenolpyruvate-dependent sugar phosphotransferase system (sugar PTS), a major carbohydrate active transport system, catalyzes the phosphorylation of incoming sugar substrates concomitantly with their translocation across the cell membrane. This system is involved in the uptake and phosphorylation of MurNAc-GlcNAc, the principle peptidoglycan turnover product of S.aureus, yielding cytoplasmic MurNAc 6P-GlcNAc. The sequence is that of PTS system MurNAc-GlcNAc-specific EIIBC component from Staphylococcus aureus (strain Mu50 / ATCC 700699).